A 346-amino-acid polypeptide reads, in one-letter code: L-glyceraldehyde 3-phosphate reductase (346 aa).

Positions 33, 61, 66, 168, 193, 223, 225, 227, 233, 303, 307, and 311 each coordinate NADP(+).

This sequence belongs to the shaker potassium channel beta subunit family. In terms of assembly, homotetramer. Homooctamer.

It catalyses the reaction a primary alcohol + NADP(+) = an aldehyde + NADPH + H(+). The enzyme catalyses hydroxyacetone + NADP(+) = methylglyoxal + NADPH + H(+). Functionally, aldo-keto reductase that catalyzes the stereospecific, NADPH-dependent reduction of L-glyceraldehyde 3-phosphate (L-GAP) to L-glycerol 3-phosphate (L-G3P). The physiological role of Gpr is the detoxification of L-GAP, which may be formed via non-enzymatic and/or enzymatic racemization of D-GAP. Also contributes to cellular methylglyoxal detoxification by catalyzing the NADPH-dependent conversion of methylglyoxal to acetol. However, the catalytic efficiency of methylglyoxal reductase activity is more than 2 orders of magnitude lower than the L-GAP reductase activity. In addition, exhibits activity with glyoxal and probably plays a significant role in detoxification of glyoxal in vivo. Shows broad specificity and can use aromatic aldehydes such as 4-nitrobenzaldehyde and benzaldehyde, D,L-glyceraldehyde, phenylglyoxal, isatin and the model substrate 4-nitrobenzaldehyde. This is L-glyceraldehyde 3-phosphate reductase from Escherichia coli (strain K12).